Reading from the N-terminus, the 33-residue chain is Pardaxin P-5 (33 aa).

Belongs to the pardaxin family. In terms of assembly, monomer. In aqueous solution exists as a tetramer.

The protein resides in the secreted. The protein localises to the target cell membrane. Its function is as follows. Exhibits unusual shark repellent and surfactant properties. Forms voltage-dependent, ion-permeable channels in membranes. At high concentration causes cell membrane lysis. In Pardachirus marmoratus (Finless sole), this protein is Pardaxin P-5.